Consider the following 189-residue polypeptide: Putative manganese efflux pump MntP (189 aa).

The next 6 helical transmembrane spans lie at 3–23, 41–61, 65–85, 103–123, 132–152, and 167–187; these read LSAT…ASIG, LIFG…GLFA, IMEW…MRMI, GFWL…AIGV, IVHT…LGMM, and ILGG…HLGY.

This sequence belongs to the MntP (TC 9.B.29) family.

It is found in the cell inner membrane. In terms of biological role, probably functions as a manganese efflux pump. This Serratia proteamaculans (strain 568) protein is Putative manganese efflux pump MntP.